Here is a 193-residue protein sequence, read N- to C-terminus: Recombination protein RecR (193 aa).

The C4-type zinc finger occupies 61–76; the sequence is CASCNALSESEICEIC. The 87-residue stretch at 84–170 folds into the Toprim domain; sequence SQLCMVLHPR…TFTKIAQGVP (87 aa).

The protein belongs to the RecR family.

Functionally, may play a role in DNA repair. It seems to be involved in an RecBC-independent recombinational process of DNA repair. It may act with RecF and RecO. The polypeptide is Recombination protein RecR (Helicobacter pylori (strain Shi470)).